The following is a 253-amino-acid chain: Ribosome-inactivating protein saporin-7 (253 aa).

Glutamate 176 is an active-site residue.

This sequence belongs to the ribosome-inactivating protein family. Type 1 RIP subfamily.

The enzyme catalyses Endohydrolysis of the N-glycosidic bond at one specific adenosine on the 28S rRNA.. Ribosome-inactivating protein of type 1, inhibits protein synthesis in animal cells. The chain is Ribosome-inactivating protein saporin-7 (SAP7) from Saponaria officinalis (Common soapwort).